The following is a 269-amino-acid chain: Cell cycle regulator CcrZ (269 aa).

Residues F39, H76, W77, M78, and G80 each contribute to the ATP site. A Brenner's motif [HXDhX3N] motif is present at residues 164-171; that stretch reads HCDVNHNN. D166 acts as the Proton acceptor in catalysis. The APH motif lies at 180 to 203; sequence LYLIDWDGAMIADPAMDLGPLLYH.

This sequence belongs to the aminoglycoside phosphotransferase family. In terms of assembly, monomer in solution. Interacts with DnaA (via domains I (1-82) and III (111-326)). Interacts with DnaB. Interacts with FtsZ.

It is found in the cytoplasm. The enzyme catalyses D-ribose + ATP = D-ribose 5-phosphate + ADP + H(+). It catalyses the reaction 2-deoxy-D-ribose + ATP = 2-deoxy-D-ribose 5-phosphate + ADP + H(+). Activated by D-ribose and 2-deoxy-D-ribose. Slightly activated by kanamycin and gentamicin. Its function is as follows. Plays a role in cell cycle regulation and chromosome integrity. Activates DnaA-dependent chromosomal DNA replication initiation ensuring that the chromosome is replicated at the right time during the cell cycle. May regulate replication initiation through phosphorylation of a possible second messenger or metabolite, and by interacting with replication initiation proteins. Has ATPase activity with D-ribose and 2-deoxy-D-ribose in vitro, but not with choline. Involved in DNA damage response. The chain is Cell cycle regulator CcrZ from Bacillus subtilis (strain 168).